The chain runs to 150 residues: MNVILLDKIANLGNLGDQVAVKAGYARNYLLPQGKAVVANESNVKVFEARRAELEAKLAADLAAANQRAEKIAALEAVVIASKAGDEGKLFGSVGNRDIADAVTAAGVELAKSEVRLPLGALRTTGDFEVEVQLHTEVKAVVKVSIVAEA.

It belongs to the bacterial ribosomal protein bL9 family.

Its function is as follows. Binds to the 23S rRNA. This Shewanella oneidensis (strain ATCC 700550 / JCM 31522 / CIP 106686 / LMG 19005 / NCIMB 14063 / MR-1) protein is Large ribosomal subunit protein bL9.